The chain runs to 1089 residues: Carbamoyl phosphate synthase large chain (1089 aa).

The tract at residues 1-399 is carboxyphosphate synthetic domain; that stretch reads MPKRTDIKSI…SIQKALCSLE (399 aa). 12 residues coordinate ATP: R127, R167, G173, G174, E206, L208, E213, G239, V240, H241, Q283, and E297. The ATP-grasp 1 domain occupies 131–326; it reads KECMKKIGMD…IAKVATLLAV (196 aa). 3 residues coordinate Mg(2+): Q283, E297, and N299. 3 residues coordinate Mn(2+): Q283, E297, and N299. Residues 400–553 form an oligomerization domain region; sequence RSLSGFDRVK…NVSELTQSKN (154 aa). Positions 554–951 are carbamoyl phosphate synthetic domain; sequence DAKDKKEKKV…SYAKSQIASF (398 aa). One can recognise an ATP-grasp 2 domain in the interval 680–871; sequence AEFITKLGIN…LAKVATRVMW (192 aa). The ATP site is built by R716, Q755, L757, E762, G787, I788, H789, S790, Q830, and E842. Positions 830, 842, and 844 each coordinate Mg(2+). The Mn(2+) site is built by Q830, E842, and N844. One can recognise an MGS-like domain in the interval 952–1089; the sequence is NHLPEQGVVF…VKSLQEWLKS (138 aa). An allosteric domain region spans residues 952-1089; the sequence is NHLPEQGVVF…VKSLQEWLKS (138 aa).

It belongs to the CarB family. Composed of two chains; the small (or glutamine) chain promotes the hydrolysis of glutamine to ammonia, which is used by the large (or ammonia) chain to synthesize carbamoyl phosphate. Tetramer of heterodimers (alpha,beta)4. Mg(2+) serves as cofactor. Requires Mn(2+) as cofactor.

It carries out the reaction hydrogencarbonate + L-glutamine + 2 ATP + H2O = carbamoyl phosphate + L-glutamate + 2 ADP + phosphate + 2 H(+). The catalysed reaction is hydrogencarbonate + NH4(+) + 2 ATP = carbamoyl phosphate + 2 ADP + phosphate + 2 H(+). Its pathway is amino-acid biosynthesis; L-arginine biosynthesis; carbamoyl phosphate from bicarbonate: step 1/1. The protein operates within pyrimidine metabolism; UMP biosynthesis via de novo pathway; (S)-dihydroorotate from bicarbonate: step 1/3. Large subunit of the glutamine-dependent carbamoyl phosphate synthetase (CPSase). CPSase catalyzes the formation of carbamoyl phosphate from the ammonia moiety of glutamine, carbonate, and phosphate donated by ATP, constituting the first step of 2 biosynthetic pathways, one leading to arginine and/or urea and the other to pyrimidine nucleotides. The large subunit (synthetase) binds the substrates ammonia (free or transferred from glutamine from the small subunit), hydrogencarbonate and ATP and carries out an ATP-coupled ligase reaction, activating hydrogencarbonate by forming carboxy phosphate which reacts with ammonia to form carbamoyl phosphate. This Campylobacter jejuni subsp. jejuni serotype O:2 (strain ATCC 700819 / NCTC 11168) protein is Carbamoyl phosphate synthase large chain.